Consider the following 206-residue polypeptide: Small ribosomal subunit protein uS4 (206 aa).

The region spanning S96–K156 is the S4 RNA-binding domain.

This sequence belongs to the universal ribosomal protein uS4 family. In terms of assembly, part of the 30S ribosomal subunit. Contacts protein S5. The interaction surface between S4 and S5 is involved in control of translational fidelity.

Its function is as follows. One of the primary rRNA binding proteins, it binds directly to 16S rRNA where it nucleates assembly of the body of the 30S subunit. With S5 and S12 plays an important role in translational accuracy. In Buchnera aphidicola subsp. Acyrthosiphon pisum (strain 5A), this protein is Small ribosomal subunit protein uS4.